Reading from the N-terminus, the 350-residue chain is N-acetyl-gamma-glutamyl-phosphate reductase (350 aa).

Cys154 is an active-site residue.

This sequence belongs to the NAGSA dehydrogenase family. Type 1 subfamily.

The protein resides in the cytoplasm. It carries out the reaction N-acetyl-L-glutamate 5-semialdehyde + phosphate + NADP(+) = N-acetyl-L-glutamyl 5-phosphate + NADPH + H(+). The protein operates within amino-acid biosynthesis; L-arginine biosynthesis; N(2)-acetyl-L-ornithine from L-glutamate: step 3/4. In terms of biological role, catalyzes the NADPH-dependent reduction of N-acetyl-5-glutamyl phosphate to yield N-acetyl-L-glutamate 5-semialdehyde. The sequence is that of N-acetyl-gamma-glutamyl-phosphate reductase from Corynebacterium efficiens (strain DSM 44549 / YS-314 / AJ 12310 / JCM 11189 / NBRC 100395).